The primary structure comprises 85 residues: U4-theraphotoxin-Hhn1ad (85 aa).

The signal sequence occupies residues 1–22 (MKVTLIAILTCAAVLVLHTTAA). A propeptide spanning residues 23–48 (EELKTESQLMEVGMPDTELATVDEER) is cleaved from the precursor. Cystine bridges form between C52–C66, C56–C77, and C71–C82.

The protein belongs to the neurotoxin 12 (Hwtx-2) family. 02 (Hwtx-2) subfamily. Expressed by the venom gland.

The protein localises to the secreted. Postsynaptic neurotoxin. In Cyriopagopus hainanus (Chinese bird spider), this protein is U4-theraphotoxin-Hhn1ad.